We begin with the raw amino-acid sequence, 421 residues long: NAD-specific glutamate dehydrogenase (421 aa).

2 residues coordinate substrate: lysine 70 and lysine 94. Lysine 106 functions as the Proton donor in the catalytic mechanism. NAD(+)-binding residues include threonine 191 and asparagine 222. Serine 355 is a substrate binding site.

It belongs to the Glu/Leu/Phe/Val dehydrogenases family. Homohexamer.

The catalysed reaction is L-glutamate + NAD(+) + H2O = 2-oxoglutarate + NH4(+) + NADH + H(+). It functions in the pathway amino-acid degradation; L-glutamate degradation via hydroxyglutarate pathway; crotonoyl-CoA from L-glutamate: step 1/5. In Peptoniphilus asaccharolyticus (Peptostreptococcus asaccharolyticus), this protein is NAD-specific glutamate dehydrogenase.